Reading from the N-terminus, the 159-residue chain is WYSSMFAANIKQEPISHHNHHHHHHHGHHQHQQRHNSNSNASSPHQSPLPNLQLEQYLKQQQQQPLMWSGLPNPMQTIMPANMRPSPTAATAATTTELCAPTTTVAAIAMQANDKLQALTPPMDVTPPKSPAKSQQSCAEPEKEHDLMSNSSEDMKYMA.

The segment covering 18–34 (HNHHHHHHHGHHQHQQR) has biased composition (basic residues). 2 disordered regions span residues 18–49 (HNHHHHHHHGHHQHQQRHNSNSNASSPHQSPL) and 119–159 (LTPP…KYMA). The span at 140–159 (EPEKEHDLMSNSSEDMKYMA) shows a compositional bias: basic and acidic residues.

It belongs to the hunchback C2H2-type zinc-finger protein family.

The protein localises to the nucleus. Its function is as follows. Gap class segmentation protein that controls development of head structures. The sequence is that of Protein hunchback (hb) from Drosophila soonae (Fruit fly).